Reading from the N-terminus, the 359-residue chain is ATP synthase subunit gamma, chloroplastic (359 aa).

The transit peptide at 1–35 directs the protein to the chloroplast; it reads MSCSHLSTAWSSSALASSASTTRRRSPPRSGLLVR. The active site involves C124. A disulfide bond links C234 and C240.

The protein belongs to the ATPase gamma chain family. F-type ATPases have 2 components, CF(1) - the catalytic core - and CF(0) - the membrane proton channel. CF(1) has five subunits: alpha(3), beta(3), gamma(1), delta(1), epsilon(1). CF(0) has four main subunits: a, b, b' and c.

The protein localises to the plastid. Its subcellular location is the chloroplast thylakoid membrane. Produces ATP from ADP in the presence of a proton gradient across the membrane. The gamma chain is believed to be important in regulating ATPase activity and the flow of protons through the CF(0) complex. Its function is as follows. Inceptin is a proteolytic fragment produced by insect larvae that previously ingested the protein. This peptide mediate plant perception of herbivory through the induction of volatile, phenylpropanoid and protease inhibitor defenses such as ethylene, jasmonic acid and salicylic acid for example. The protein is ATP synthase subunit gamma, chloroplastic of Zea mays (Maize).